An 813-amino-acid chain; its full sequence is Leucine--tRNA ligase (813 aa).

Positions 40 to 51 (SYPSGSKLHAGH) match the 'HIGH' region motif. The 'KMSKS' region signature appears at 572-576 (KMSKS). Lys-575 contacts ATP.

This sequence belongs to the class-I aminoacyl-tRNA synthetase family.

Its subcellular location is the cytoplasm. It carries out the reaction tRNA(Leu) + L-leucine + ATP = L-leucyl-tRNA(Leu) + AMP + diphosphate. The protein is Leucine--tRNA ligase of Clostridium botulinum (strain Langeland / NCTC 10281 / Type F).